Here is a 185-residue protein sequence, read N- to C-terminus: MKRNVLLLPLLIFLLIAAALLWQLARNAQGDDPTNLESALTGKPVPAFRLESLETPGQYYQAEVLTQGKPVLLNVWATWCPTCRAEHQYLNQLSAQGIRVVGLNYKDDRAKAVAWLKELGNPYALSLSDSDGMLGLDLGVYGAPETFLIDGRGIIRYRHAGDLNARVWESELKPLWDRYSREAAQ.

The Cytoplasmic portion of the chain corresponds to 1–4 (MKRN). A helical transmembrane segment spans residues 5-25 (VLLLPLLIFLLIAAALLWQLA). At 26 to 185 (RNAQGDDPTN…WDRYSREAAQ (160 aa)) the chain is on the periplasmic side. A Thioredoxin domain is found at 39–177 (ALTGKPVPAF…WESELKPLWD (139 aa)). Cysteine 80 and cysteine 83 are oxidised to a cystine.

Belongs to the thioredoxin family. DsbE subfamily.

The protein resides in the cell inner membrane. Functionally, involved in disulfide bond formation. Catalyzes a late, reductive step in the assembly of periplasmic c-type cytochromes, probably the reduction of disulfide bonds of the apocytochrome c to allow covalent linkage with the heme. Possible subunit of a heme lyase. This Salmonella typhimurium (strain LT2 / SGSC1412 / ATCC 700720) protein is Thiol:disulfide interchange protein DsbE (dsbE1).